A 244-amino-acid polypeptide reads, in one-letter code: ATP synthase subunit a (244 aa).

A run of 6 helical transmembrane segments spans residues 25–45 (ISFT…LLIF), 85–105 (YFAF…FGMI), 115–135 (IIVT…IGFM), 144–164 (LFVP…IEII), 193–213 (GFVI…SVAL), and 216–236 (LEIL…CIYL).

Belongs to the ATPase A chain family. F-type ATPases have 2 components, CF(1) - the catalytic core - and CF(0) - the membrane proton channel. CF(1) has five subunits: alpha(3), beta(3), gamma(1), delta(1), epsilon(1). CF(0) has three main subunits: a(1), b(2) and c(9-12). The alpha and beta chains form an alternating ring which encloses part of the gamma chain. CF(1) is attached to CF(0) by a central stalk formed by the gamma and epsilon chains, while a peripheral stalk is formed by the delta and b chains.

It localises to the cell inner membrane. Key component of the proton channel; it plays a direct role in the translocation of protons across the membrane. The sequence is that of ATP synthase subunit a from Pelagibacter ubique (strain HTCC1062).